The primary structure comprises 310 residues: Putative carbonic anhydrase 5 (310 aa).

An N-terminal signal peptide occupies residues 1 to 20 (MPSHLLVLSLLVALLVVVSC). One can recognise an Alpha-carbonic anhydrase domain in the interval 26–280 (HGWGYDENNG…LNGRRIQYRP (255 aa)). The Zn(2+) site is built by histidine 117, histidine 119, and histidine 142. 223–224 (TT) provides a ligand contact to substrate.

It belongs to the alpha-carbonic anhydrase family.

It localises to the secreted. It carries out the reaction hydrogencarbonate + H(+) = CO2 + H2O. In terms of biological role, reversible hydration of carbon dioxide. In Caenorhabditis elegans, this protein is Putative carbonic anhydrase 5 (cah-5).